The chain runs to 388 residues: 3beta-hydroxysteroid dehydrogenase dhs-16 (388 aa).

Residues 2–22 (LELIYILPLLCFVYFLFRRFV) traverse the membrane as a helical segment. The Proton acceptor role is filled by Tyr188. 2 helical membrane passes run 300 to 320 (AIFMFIPLSIFPTALQDWILA) and 346 to 366 (IQWIQFLSQIAIIPLLYTIFF).

This sequence belongs to the short-chain dehydrogenases/reductases (SDR) family. In terms of tissue distribution, strongly expressed in the hypodermis and posterior pharyngeal bulb and in a number of unidentified neurons of the head and tail.

Its subcellular location is the membrane. It carries out the reaction lathosterol + NAD(+) = 5alpha-cholest-7-en-3-one + NADH + H(+). The protein operates within steroid hormone biosynthesis; dafachronic acid biosynthesis. 3beta-hydroxysteroid dehydrogenase that converts 3beta-hydroxysteroids to 3-ketosteroids, an essential step in the production of dafachronic acids from cholesterol. Catalyzes the dehydrogenation of lathosterol (5alpha-cholest-7-en-3beta-ol) to lathosterone (5alpha-cholest-7-en-3-one), a step required for maximal biosynthesis of Delta(7)-dafachronic acid. Dafachronic acids act as ligands and bind directly to the nuclear hormone receptor (NHR) daf-12, suppressing dauer formation and inducing reproductive growth, they can also regulate C.elegans lifespan. In Caenorhabditis elegans, this protein is 3beta-hydroxysteroid dehydrogenase dhs-16 (dhs-16).